A 420-amino-acid chain; its full sequence is MSLEIEKIHAREILDSRGNPTVEVDVWTCCGFGRAAVPSGASTGTYEALELRDGGDRYDGKGVLKAVRNVNEVIGPKLIGMDVIDQRGVDQIMIEMDGTPNKSNLGANAILGVSLAVAKAAASSLGMPLYRYLGGVSATRLPVPSLNVLNGGKHAGNDLSIQEFMIEPWGADSFSEALRMAAETYHALGRILRGKYGNVATNVGFEGGYAPPISKTRDALDAIMAALDVTGYTEEIKLGLDSAASSFYLDGGYSVDDNRLSPGELIDFYVELVKTYPIVLIEDPFEENAFEEFAELTKKLPDTIIVGDDLYVTNMARIEKGIRMRSTNALLLKLNQIGTVSEAFDAATLAYRNSFKVMVSHRSAETEDSALADVSVAIGAELIKTGAPARSERNAKYNQLLRIQEALGSSASYAGRRRWS.

Q162 contributes to the (2R)-2-phosphoglycerate binding site. The active-site Proton donor is the E206. Residues D241, E282, and D308 each contribute to the Mg(2+) site. Positions 333, 362, 363, and 384 each coordinate (2R)-2-phosphoglycerate. The active-site Proton acceptor is K333.

Belongs to the enolase family. It depends on Mg(2+) as a cofactor.

Its subcellular location is the cytoplasm. It localises to the secreted. The protein localises to the cell surface. The enzyme catalyses (2R)-2-phosphoglycerate = phosphoenolpyruvate + H2O. It functions in the pathway carbohydrate degradation; glycolysis; pyruvate from D-glyceraldehyde 3-phosphate: step 4/5. Functionally, catalyzes the reversible conversion of 2-phosphoglycerate (2-PG) into phosphoenolpyruvate (PEP). It is essential for the degradation of carbohydrates via glycolysis. The protein is Enolase of Methanothrix thermoacetophila (strain DSM 6194 / JCM 14653 / NBRC 101360 / PT) (Methanosaeta thermophila).